The chain runs to 549 residues: Probable protein kinase UbiB (549 aa).

The Protein kinase domain maps to 123-501 (DFNETPLASA…QQQAHKSNYL (379 aa)). Residues 129–137 (LASASISQV) and lysine 152 contribute to the ATP site. The active-site Proton acceptor is the aspartate 287. 2 helical membrane passes run 498–518 (SNYL…LFNQ) and 520–540 (ATLL…IIGW).

The protein belongs to the ABC1 family. UbiB subfamily.

It localises to the cell inner membrane. It functions in the pathway cofactor biosynthesis; ubiquinone biosynthesis [regulation]. Functionally, is probably a protein kinase regulator of UbiI activity which is involved in aerobic coenzyme Q (ubiquinone) biosynthesis. This Shewanella oneidensis (strain ATCC 700550 / JCM 31522 / CIP 106686 / LMG 19005 / NCIMB 14063 / MR-1) protein is Probable protein kinase UbiB.